The sequence spans 121 residues: DLVEFGFMIRCANRNSQPAWQYMDYGCYCGKRGSGTPVDDVDRCCQTHNECYDEAAKIPGCKPKWTFYFYQCGSGSQFTCRKSKDVCRNVVCDCDFKAALCLTGARYNSANYNIDIKTHCR.

7 disulfides stabilise this stretch: Cys-11-Cys-72, Cys-27-Cys-120, Cys-29-Cys-45, Cys-44-Cys-101, Cys-51-Cys-94, Cys-61-Cys-87, and Cys-80-Cys-92.

Belongs to the phospholipase A2 family. Group I subfamily. N49 sub-subfamily. Heterohexamer. 2 forms exist: 2 A or 2 B chains, 2 C chains and 2 covalently-linked D chains, and 1 A or 1 B, 1 C, 2 covalently-linked D chains and 2 differentially glycosylated covalently-linked D chains. Textilotoxin was originally described as pentameric. In terms of tissue distribution, expressed by the venom gland.

Its subcellular location is the secreted. Its function is as follows. Snake venom oligomeric phospholipase A2 that has potent presynaptic neurotoxicity. Chain B is not itself neurotoxic, but it is essential for the neurotoxicity of textilotoxin. Subunit B possesses a very low phospholipase activity. This is Basic phospholipase A2 homolog textilotoxin B chain from Pseudonaja textilis (Eastern brown snake).